A 91-amino-acid polypeptide reads, in one-letter code: MRVNRQGIIVWFQHMKNIKQLRKHGNVIYASKTKRYAVIYVNQDEMDDVELKIINYPFVSKVERSQKPFVRTDYENAKPDKAKQYDYKMGI.

The protein belongs to the UPF0298 family.

It is found in the cytoplasm. The chain is UPF0298 protein OB1449 from Oceanobacillus iheyensis (strain DSM 14371 / CIP 107618 / JCM 11309 / KCTC 3954 / HTE831).